A 368-amino-acid polypeptide reads, in one-letter code: tRNA-specific 2-thiouridylase MnmA (368 aa).

ATP is bound by residues 11 to 18 (GMSGGVDS) and Met37. The interval 97-99 (NPD) is interaction with target base in tRNA. Cys102 (nucleophile) is an active-site residue. Cys102 and Cys199 are joined by a disulfide. Residue Gly127 participates in ATP binding. Residues 149-151 (KDQ) are interaction with tRNA. Cys199 (cysteine persulfide intermediate) is an active-site residue. An interaction with tRNA region spans residues 311–312 (RY).

The protein belongs to the MnmA/TRMU family.

Its subcellular location is the cytoplasm. The catalysed reaction is S-sulfanyl-L-cysteinyl-[protein] + uridine(34) in tRNA + AH2 + ATP = 2-thiouridine(34) in tRNA + L-cysteinyl-[protein] + A + AMP + diphosphate + H(+). Catalyzes the 2-thiolation of uridine at the wobble position (U34) of tRNA, leading to the formation of s(2)U34. The sequence is that of tRNA-specific 2-thiouridylase MnmA from Baumannia cicadellinicola subsp. Homalodisca coagulata.